The primary structure comprises 421 residues: Serine hydroxymethyltransferase (421 aa).

(6S)-5,6,7,8-tetrahydrofolate is bound by residues Leu121 and 125–127 (GHL). Residue Lys230 is modified to N6-(pyridoxal phosphate)lysine. A (6S)-5,6,7,8-tetrahydrofolate-binding site is contributed by 355–357 (SPF).

The protein belongs to the SHMT family. In terms of assembly, homodimer. Pyridoxal 5'-phosphate is required as a cofactor.

It is found in the cytoplasm. It carries out the reaction (6R)-5,10-methylene-5,6,7,8-tetrahydrofolate + glycine + H2O = (6S)-5,6,7,8-tetrahydrofolate + L-serine. The protein operates within one-carbon metabolism; tetrahydrofolate interconversion. It functions in the pathway amino-acid biosynthesis; glycine biosynthesis; glycine from L-serine: step 1/1. Its function is as follows. Catalyzes the reversible interconversion of serine and glycine with tetrahydrofolate (THF) serving as the one-carbon carrier. This reaction serves as the major source of one-carbon groups required for the biosynthesis of purines, thymidylate, methionine, and other important biomolecules. Also exhibits THF-independent aldolase activity toward beta-hydroxyamino acids, producing glycine and aldehydes, via a retro-aldol mechanism. The chain is Serine hydroxymethyltransferase from Psychromonas ingrahamii (strain DSM 17664 / CCUG 51855 / 37).